The chain runs to 651 residues: ATP-dependent RNA helicase MRH4, mitochondrial (651 aa).

The N-terminal 61 residues, 1–61 (MLRSSLGSVC…SNARQATRRE (61 aa)), are a transit peptide targeting the mitochondrion. Positions 45 to 56 (SSLSFSTSNARQ) are enriched in polar residues. The segment at 45 to 137 (SSLSFSTSNA…GGKKLGRDGK (93 aa)) is disordered. Basic and acidic residues-rich tracts occupy residues 72-83 (RVGRSTARDGDK) and 124-137 (NGRE…RDGK). Positions 167–200 (DSFDQFDLLPQVKDAVLNEALKGMLDIKPTPVQR) match the Q motif motif. Residues 210 to 241 (TTGARSRWRTKSKPADSGSEAASPDAPPPPRE) are disordered. Over residues 224–233 (ADSGSEAASP) the composition is skewed to low complexity. Residues 234–445 (DAPPPPREEF…ASRFPNMRRI (212 aa)) form the Helicase ATP-binding domain. 247–254 (AETGSGKT) is a binding site for ATP. The short motif at 392–395 (DEAD) is the DEAD box element. Residues 494 to 651 (PVKGQVDVRR…ESMFMGQALV (158 aa)) enclose the Helicase C-terminal domain.

The protein belongs to the DEAD box helicase family. MRH4 subfamily.

The protein localises to the mitochondrion. It carries out the reaction ATP + H2O = ADP + phosphate + H(+). Its function is as follows. ATP-binding RNA helicase involved in mitochondrial RNA metabolism. Required for maintenance of mitochondrial DNA. This is ATP-dependent RNA helicase MRH4, mitochondrial (MRH4) from Pyricularia oryzae (strain 70-15 / ATCC MYA-4617 / FGSC 8958) (Rice blast fungus).